The primary structure comprises 624 residues: Chaperone protein HtpG (624 aa).

Positions 1–336 are a; substrate-binding; that stretch reads MKGQETRGFQ…SNDLPLNVSR (336 aa). The segment at 337-552 is b; it reads EILQDSTVTR…ADEMSTQMAK (216 aa). Positions 553-624 are c; the sequence is LFAAAGQSVP…IRRMNQLLVS (72 aa).

Belongs to the heat shock protein 90 family. In terms of assembly, homodimer.

It is found in the cytoplasm. Molecular chaperone. Has ATPase activity. The sequence is that of Chaperone protein HtpG from Salmonella typhi.